Reading from the N-terminus, the 201-residue chain is Ciliary microtubule inner protein 2C (201 aa).

It belongs to the CIMIP2 family. In terms of assembly, microtubule inner protein component of sperm flagellar doublet microtubules.

Its subcellular location is the cytoplasm. The protein resides in the cytoskeleton. The protein localises to the cilium axoneme. It is found in the flagellum axoneme. In terms of biological role, microtubule inner protein (MIP) part of the dynein-decorated doublet microtubules (DMTs) in cilia axoneme, which is required for motile cilia beating. Binds to the intra-tubulin interfaces. This Bos taurus (Bovine) protein is Ciliary microtubule inner protein 2C (CIMIP2C).